The primary structure comprises 133 residues: ATP synthase epsilon chain, chloroplastic (133 aa).

This sequence belongs to the ATPase epsilon chain family. In terms of assembly, F-type ATPases have 2 components, CF(1) - the catalytic core - and CF(0) - the membrane proton channel. CF(1) has five subunits: alpha(3), beta(3), gamma(1), delta(1), epsilon(1). CF(0) has three main subunits: a, b and c.

Its subcellular location is the plastid. The protein resides in the chloroplast thylakoid membrane. Produces ATP from ADP in the presence of a proton gradient across the membrane. This Vitis vinifera (Grape) protein is ATP synthase epsilon chain, chloroplastic.